The sequence spans 404 residues: Ubiquitin-like modifier-activating enzyme 5 (404 aa).

Position 45 is a phosphoserine (Ser45). 5 residues coordinate ATP: Gly83, Asp104, Lys127, Asn150, and Asn184. Residues Cys226 and Cys229 each coordinate Zn(2+). Cys250 (glycyl thioester intermediate) is an active-site residue. Residues Cys303 and Cys308 each contribute to the Zn(2+) site. The short motif at 334–346 (IIHEDNEWGIELV) is the UFM1-interacting sequence (UIS) element. The linker stretch occupies residues 347–377 (SEVSEEELKNFSGPVPDLPEGITVAYTIPKK). A phosphoserine mark is found at Ser358 and Ser393. The short motif at 389 to 404 (DSGESLEDLMAKMKNM) is the UFC1-binding sequence (UFC) element.

Belongs to the ubiquitin-activating E1 family. UBA5 subfamily. As to quaternary structure, homodimer; homodimerization is required for UFM1 activation. Interacts (via UIS motif) with UFM1; binds UFM1 via a trans-binding mechanism in which UFM1 interacts with distinct sites in both subunits of the UBA5 homodimer. Interacts (via C-terminus) with UFC1. Interacts (via UIS motif) with GABARAPL2 and, with lower affinity, with GABARAP and GABARAPL1. In terms of tissue distribution, widely expressed.

It is found in the cytoplasm. The protein resides in the nucleus. Its subcellular location is the endoplasmic reticulum membrane. The protein localises to the golgi apparatus. E1-like enzyme which specifically catalyzes the first step in ufmylation. Activates UFM1 by first adenylating its C-terminal glycine residue with ATP, and thereafter linking this residue to the side chain of a cysteine residue in E1, yielding a UFM1-E1 thioester and free AMP. Activates UFM1 via a trans-binding mechanism, in which UFM1 interacts with distinct sites in both subunits of the UBA5 homodimer. Trans-binding also promotes stabilization of the UBA5 homodimer, and enhances ATP-binding. Transfer of UFM1 from UBA5 to the E2-like enzyme UFC1 also takes place using a trans mechanism. Ufmylation plays a key role in various processes, such as ribosome recycling, response to DNA damage, interferon response or reticulophagy (also called ER-phagy). Ufmylation is essential for erythroid differentiation of both megakaryocytes and erythrocytes. The protein is Ubiquitin-like modifier-activating enzyme 5 of Homo sapiens (Human).